Consider the following 262-residue polypeptide: Acyl-[acyl-carrier-protein]--UDP-N-acetylglucosamine O-acyltransferase (262 aa).

This sequence belongs to the transferase hexapeptide repeat family. LpxA subfamily. As to quaternary structure, homotrimer.

Its subcellular location is the cytoplasm. The enzyme catalyses a (3R)-hydroxyacyl-[ACP] + UDP-N-acetyl-alpha-D-glucosamine = a UDP-3-O-[(3R)-3-hydroxyacyl]-N-acetyl-alpha-D-glucosamine + holo-[ACP]. Its pathway is glycolipid biosynthesis; lipid IV(A) biosynthesis; lipid IV(A) from (3R)-3-hydroxytetradecanoyl-[acyl-carrier-protein] and UDP-N-acetyl-alpha-D-glucosamine: step 1/6. In terms of biological role, involved in the biosynthesis of lipid A, a phosphorylated glycolipid that anchors the lipopolysaccharide to the outer membrane of the cell. This is Acyl-[acyl-carrier-protein]--UDP-N-acetylglucosamine O-acyltransferase from Escherichia coli O157:H7.